Here is a 113-residue protein sequence, read N- to C-terminus: Cell wall protein PGA59 (113 aa).

An N-terminal signal peptide occupies residues 1 to 18 (MQFSSAIILSAVAGSALA). N-linked (GlcNAc...) asparagine glycans are attached at residues N22 and N80. G92 carries the GPI-anchor amidated glycine lipid modification. Residues 93-113 (AAAANAVPAVAAGLLALGAFM) constitute a propeptide, removed in mature form.

It belongs to the HWP1 family. In terms of processing, N- and O-glycosylated. Post-translationally, the GPI-anchor is attached to the protein in the endoplasmic reticulum and serves to target the protein to the cell surface. There, the glucosamine-inositol phospholipid moiety is cleaved off and the GPI-modified mannoprotein is covalently attached via its lipidless GPI glycan remnant to the 1,6-beta-glucan of the outer cell wall layer.

The protein localises to the secreted. It is found in the cell wall. The protein resides in the membrane. Cell wall protein necessary for cell wall integrity. Plays only a minor role in hyphal morphogenesis and is not critical to biofilm formation. The protein is Cell wall protein PGA59 (PGA59) of Candida albicans (strain SC5314 / ATCC MYA-2876) (Yeast).